A 253-amino-acid polypeptide reads, in one-letter code: Flagellar brake protein YcgR (253 aa).

A PilZ domain is found at 120–239; that stretch reads QRRDFYRFAT…NEGLINRYVY (120 aa).

Belongs to the YcgR family. As to quaternary structure, monomer. Interacts with the flagellar basal bodies.

The protein localises to the bacterial flagellum basal body. Acts as a flagellar brake, regulating swimming and swarming in a bis-(3'-5') cyclic diguanylic acid (c-di-GMP)-dependent manner. Binds 1 c-di-GMP dimer per subunit. Increasing levels of c-di-GMP lead to decreased motility. The polypeptide is Flagellar brake protein YcgR (Methylotenera mobilis (strain JLW8 / ATCC BAA-1282 / DSM 17540)).